We begin with the raw amino-acid sequence, 450 residues long: UDP-N-acetylmuramoylalanine--D-glutamate ligase (450 aa).

119 to 125 (GSNGKTT) lines the ATP pocket.

Belongs to the MurCDEF family.

It is found in the cytoplasm. It catalyses the reaction UDP-N-acetyl-alpha-D-muramoyl-L-alanine + D-glutamate + ATP = UDP-N-acetyl-alpha-D-muramoyl-L-alanyl-D-glutamate + ADP + phosphate + H(+). It functions in the pathway cell wall biogenesis; peptidoglycan biosynthesis. Its function is as follows. Cell wall formation. Catalyzes the addition of glutamate to the nucleotide precursor UDP-N-acetylmuramoyl-L-alanine (UMA). This chain is UDP-N-acetylmuramoylalanine--D-glutamate ligase, found in Bacillus thuringiensis (strain Al Hakam).